The following is a 296-amino-acid chain: 4-diphosphocytidyl-2-C-methyl-D-erythritol kinase (296 aa).

The active site involves K12. 94-104 (PAQAGMGGGSS) is a binding site for ATP. D136 is an active-site residue.

Belongs to the GHMP kinase family. IspE subfamily.

It carries out the reaction 4-CDP-2-C-methyl-D-erythritol + ATP = 4-CDP-2-C-methyl-D-erythritol 2-phosphate + ADP + H(+). The protein operates within isoprenoid biosynthesis; isopentenyl diphosphate biosynthesis via DXP pathway; isopentenyl diphosphate from 1-deoxy-D-xylulose 5-phosphate: step 3/6. Functionally, catalyzes the phosphorylation of the position 2 hydroxy group of 4-diphosphocytidyl-2C-methyl-D-erythritol. The protein is 4-diphosphocytidyl-2-C-methyl-D-erythritol kinase of Variovorax paradoxus (strain S110).